A 312-amino-acid chain; its full sequence is MDGGNQSEGSEFLLLGMSESPEQQRILFWMFLSMYLVTVVGNVLIILAISSDSRLHTPVYFFLANLSFTDLFFVTNTIPKMLVNLQSHNKAISYAGCLTQLYFLVSLVALDNLILAVMAYDRYVAICCPLHYTTAMSPKLCILLLSLCWVLSVLYGLIHTLLMTRVTFCGSRKIHYIFCEMYVLLRMACSNIQINHTVLIATGCFIFLIPFGFVIISYVLIIRAILRIPSVSKKYKAFSTCASHLGAVSLFYGTLCMVYLKPLHTYSVKDSVATVMYAVVTPMMNPFIYSLRNKDMHGALGRLLDKHFKRLT.

The Extracellular segment spans residues 1–25 (MDGGNQSEGSEFLLLGMSESPEQQR). A glycan (N-linked (GlcNAc...) asparagine) is linked at asparagine 5. A helical transmembrane segment spans residues 26-49 (ILFWMFLSMYLVTVVGNVLIILAI). Residues 50–57 (SSDSRLHT) are Cytoplasmic-facing. A helical transmembrane segment spans residues 58–79 (PVYFFLANLSFTDLFFVTNTIP). Topologically, residues 80–100 (KMLVNLQSHNKAISYAGCLTQ) are extracellular. Residues cysteine 97 and cysteine 189 are joined by a disulfide bond. Residues 101–120 (LYFLVSLVALDNLILAVMAY) form a helical membrane-spanning segment. Residues 121–139 (DRYVAICCPLHYTTAMSPK) lie on the Cytoplasmic side of the membrane. The chain crosses the membrane as a helical span at residues 140-158 (LCILLLSLCWVLSVLYGLI). Residues 159 to 196 (HTLLMTRVTFCGSRKIHYIFCEMYVLLRMACSNIQINH) lie on the Extracellular side of the membrane. An N-linked (GlcNAc...) asparagine glycan is attached at asparagine 195. The chain crosses the membrane as a helical span at residues 197 to 219 (TVLIATGCFIFLIPFGFVIISYV). The Cytoplasmic portion of the chain corresponds to 220–236 (LIIRAILRIPSVSKKYK). The helical transmembrane segment at 237 to 259 (AFSTCASHLGAVSLFYGTLCMVY) threads the bilayer. Over 260-271 (LKPLHTYSVKDS) the chain is Extracellular. The chain crosses the membrane as a helical span at residues 272–291 (VATVMYAVVTPMMNPFIYSL). Over 292 to 312 (RNKDMHGALGRLLDKHFKRLT) the chain is Cytoplasmic.

Belongs to the G-protein coupled receptor 1 family. In terms of tissue distribution, expressed in testis. Expressed in spermatozoa (at protein level). Expressed in olfactory epithelium.

It localises to the cell membrane. Odorant receptor which may be involved in sperm chemotaxis. Bourgeonal is a strong chemoattractant for sperm in vitro and is shown to be a strong agonist for OR1D2 in vitro. May also function in olfactory reception. The sequence is that of Olfactory receptor 1D2 (OR1D2) from Homo sapiens (Human).